A 327-amino-acid polypeptide reads, in one-letter code: MYQSLMTVRETQIAIKEVKTFFEDQLAKRLELFRVSAPLFVTKKSGLNDHLNGVERPIEFDMLHSGEELEIVHSLAKWKRFALHEYGYEAGEGLYTNMNAIRRDEELDATHSIYVDQWDWEKIVQKEWRTVDYLQKTVQTIYGIFKDLEDHLFEKYPFLGKYLPEEIVFITSQELEDKYPELTPKDREHAIAKEHGAVFIIGIGDALRSGEKHDGRAADYDDWKLNGDILFWHPVLQSSFELSSMGIRVDSKSLDEQLTKTGEDFKREYDFHKGILEDVLPLTIGGGIGQSRMCMYFLRKAHIGEVQSSVWPDDLRAACKKENIHLF.

This sequence belongs to the class-II aminoacyl-tRNA synthetase family. AsnA subfamily.

It localises to the cytoplasm. The enzyme catalyses L-aspartate + NH4(+) + ATP = L-asparagine + AMP + diphosphate + H(+). It functions in the pathway amino-acid biosynthesis; L-asparagine biosynthesis; L-asparagine from L-aspartate (ammonia route): step 1/1. The protein is Aspartate--ammonia ligase of Bacillus cereus (strain G9842).